The sequence spans 192 residues: UPF0301 protein Bmul_2524/BMULJ_00714 (192 aa).

The protein belongs to the UPF0301 (AlgH) family.

This Burkholderia multivorans (strain ATCC 17616 / 249) protein is UPF0301 protein Bmul_2524/BMULJ_00714.